We begin with the raw amino-acid sequence, 366 residues long: Ribosomal RNA large subunit methyltransferase M (366 aa).

S-adenosyl-L-methionine-binding positions include serine 188, 221-224 (CPGG), aspartate 240, aspartate 260, and aspartate 277. The Proton acceptor role is filled by lysine 306.

It belongs to the class I-like SAM-binding methyltransferase superfamily. RNA methyltransferase RlmE family. RlmM subfamily. As to quaternary structure, monomer.

Its subcellular location is the cytoplasm. It catalyses the reaction cytidine(2498) in 23S rRNA + S-adenosyl-L-methionine = 2'-O-methylcytidine(2498) in 23S rRNA + S-adenosyl-L-homocysteine + H(+). Functionally, catalyzes the 2'-O-methylation at nucleotide C2498 in 23S rRNA. This Salmonella newport (strain SL254) protein is Ribosomal RNA large subunit methyltransferase M.